Consider the following 369-residue polypeptide: Phosphoribosyl pyrophosphate synthase-associated protein 2 (369 aa).

Methionine 1 is modified (N-acetylmethionine). A phosphoserine mark is found at serine 219, serine 227, and serine 233.

This sequence belongs to the ribose-phosphate pyrophosphokinase family. Binds to PRPS1 and PRPS2.

Seems to play a negative regulatory role in 5-phosphoribose 1-diphosphate synthesis. The chain is Phosphoribosyl pyrophosphate synthase-associated protein 2 (Prpsap2) from Mus musculus (Mouse).